The sequence spans 338 residues: UDP-3-O-acylglucosamine N-acyltransferase (338 aa).

His-243 (proton acceptor) is an active-site residue.

Belongs to the transferase hexapeptide repeat family. LpxD subfamily. In terms of assembly, homotrimer.

The catalysed reaction is a UDP-3-O-[(3R)-3-hydroxyacyl]-alpha-D-glucosamine + a (3R)-hydroxyacyl-[ACP] = a UDP-2-N,3-O-bis[(3R)-3-hydroxyacyl]-alpha-D-glucosamine + holo-[ACP] + H(+). The protein operates within bacterial outer membrane biogenesis; LPS lipid A biosynthesis. Its function is as follows. Catalyzes the N-acylation of UDP-3-O-acylglucosamine using 3-hydroxyacyl-ACP as the acyl donor. Is involved in the biosynthesis of lipid A, a phosphorylated glycolipid that anchors the lipopolysaccharide to the outer membrane of the cell. This chain is UDP-3-O-acylglucosamine N-acyltransferase, found in Amoebophilus asiaticus (strain 5a2).